The primary structure comprises 189 residues: Elongation factor P (189 aa).

It belongs to the elongation factor P family.

Its subcellular location is the cytoplasm. It functions in the pathway protein biosynthesis; polypeptide chain elongation. Its function is as follows. Involved in peptide bond synthesis. Stimulates efficient translation and peptide-bond synthesis on native or reconstituted 70S ribosomes in vitro. Probably functions indirectly by altering the affinity of the ribosome for aminoacyl-tRNA, thus increasing their reactivity as acceptors for peptidyl transferase. The protein is Elongation factor P of Ehrlichia ruminantium (strain Gardel).